An 871-amino-acid polypeptide reads, in one-letter code: Alanine--tRNA ligase (871 aa).

Zn(2+) contacts are provided by His-561, His-565, Cys-665, and His-669.

The protein belongs to the class-II aminoacyl-tRNA synthetase family. The cofactor is Zn(2+).

The protein resides in the cytoplasm. It catalyses the reaction tRNA(Ala) + L-alanine + ATP = L-alanyl-tRNA(Ala) + AMP + diphosphate. In terms of biological role, catalyzes the attachment of alanine to tRNA(Ala) in a two-step reaction: alanine is first activated by ATP to form Ala-AMP and then transferred to the acceptor end of tRNA(Ala). Also edits incorrectly charged Ser-tRNA(Ala) and Gly-tRNA(Ala) via its editing domain. The polypeptide is Alanine--tRNA ligase (Dehalococcoides mccartyi (strain ATCC BAA-2266 / KCTC 15142 / 195) (Dehalococcoides ethenogenes (strain 195))).